Consider the following 1011-residue polypeptide: Poly [ADP-ribose] polymerase 1 (1011 aa).

2 consecutive PARP-type zinc fingers follow at residues 9-91 and 113-203; these read YRAE…ETGA and FAAE…PATK. Residues C21, C24, H53, C56, C125, C128, H159, and C162 each contribute to the Zn(2+) site. The tract at residues 198 to 235 is disordered; it reads QLPATKTEGKRKGEEVDGNVVAKKKSRKEKEKESKQEK. 2 consecutive short sequence motifs (nuclear localization signal) follow at residues 207–209 and 220–225; these read KRK and KKKSRK. The region spanning 224–358 is the PADR1 zinc-binding domain; it reads RKEKEKESKQ…CKKQDRIFPP (135 aa). Positions 225 to 235 are enriched in basic and acidic residues; that stretch reads KEKEKESKQEK. Residues 289-331 are zinc ribbon; it reads GALLPCEECKGQFVFKSDAYYCSGDITAWTKCVAKTQTPNRKD. Zn(2+) is bound by residues C294, C297, C310, and C320. Positions 359 to 378 are disordered; that stretch reads EAATVNSAPPPPASAPLTET. Residues 371 to 522 are automodification domain; that stretch reads ASAPLTETVT…PSKSEKKMKL (152 aa). The BRCT domain maps to 382-473; sequence PQDKPLTNMK…KGFQELLSLH (92 aa). PolyADP-ribosyl glutamic acid is present on residues E403, E404, E410, E411, E432, E434, E441, E442, E453, E454, E468, E481, E485, E488, E509, E510, and E517. The disordered stretch occupies residues 496-519; it reads SKPANMKSAGKVKEEQGPSKSEKK. Residues 506 to 519 are compositionally biased toward basic and acidic residues; the sequence is KVKEEQGPSKSEKK. One can recognise a WGR domain in the interval 539 to 635; that stretch reads SAHVFEKGGK…KNFTKYPKKF (97 aa). Positions 659 to 776 constitute a PARP alpha-helical domain; that stretch reads KSKLAKPIQD…DIEVAYSLLR (118 aa). The PARP catalytic domain occupies 785–1011; sequence DPIDINYEKL…LKFNYKTSLW (227 aa). NAD(+) contacts are provided by residues 859–861, G868, R875, and S901; that span reads HGS. The active-site For poly [ADP-ribose] polymerase activity is the E985.

This sequence belongs to the ARTD/PARP family. In terms of assembly, homodimer; PARP-type zinc-fingers from separate parp1 molecules form a dimer module that specifically recognizes DNA strand breaks. Poly-ADP-ribosylated on serine, glutamate and aspartate residues by autocatalysis. Auto-ADP-ribosylation on serine takes place following interaction with HPF1. Auto poly-ADP-ribosylation on serine residues promotes its dissociation from chromatin.

The protein resides in the chromosome. The protein localises to the nucleus. It is found in the nucleolus. Its subcellular location is the cytoplasm. It localises to the cytosol. It carries out the reaction NAD(+) + (ADP-D-ribosyl)n-acceptor = nicotinamide + (ADP-D-ribosyl)n+1-acceptor + H(+).. The catalysed reaction is L-seryl-[protein] + NAD(+) = O-(ADP-D-ribosyl)-L-seryl-[protein] + nicotinamide + H(+). The enzyme catalyses L-aspartyl-[protein] + NAD(+) = 4-O-(ADP-D-ribosyl)-L-aspartyl-[protein] + nicotinamide. It catalyses the reaction L-glutamyl-[protein] + NAD(+) = 5-O-(ADP-D-ribosyl)-L-glutamyl-[protein] + nicotinamide. It carries out the reaction L-tyrosyl-[protein] + NAD(+) = O-(ADP-D-ribosyl)-L-tyrosyl-[protein] + nicotinamide + H(+). The catalysed reaction is L-histidyl-[protein] + NAD(+) = N(tele)-(ADP-D-ribosyl)-L-histidyl-[protein] + nicotinamide + H(+). ADP-ribosyltransferase activity is regulated via an allosteric activation mechanism. In absence of activation signal, parp1 is autoinhibited by the PARP alpha-helical domain (also named HD region), which prevents effective NAD(+)-binding. Activity is highly stimulated by signals, such as DNA strand breaks. Binding to damaged DNA unfolds the PARP alpha-helical domain, relieving autoinhibition. Poly-ADP-ribosyltransferase activity is tightly regulated and parp1 is removed from damaged chromatin following initial poly-ADP-ribosylation of chromatin to avoid prolonged residence (trapping) that has cytotoxic consequences. A number of factors or post-translational modifications (auto-poly-ADP-ribosylation) promote parp1 removal from chromatin. Poly-ADP-ribosyltransferase that mediates poly-ADP-ribosylation of proteins and plays a key role in DNA repair. Mediates glutamate, aspartate, serine, histidine or tyrosine ADP-ribosylation of proteins: the ADP-D-ribosyl group of NAD(+) is transferred to the acceptor carboxyl group of target residues and further ADP-ribosyl groups are transferred to the 2'-position of the terminal adenosine moiety, building up a polymer with an average chain length of 20-30 units. Serine ADP-ribosylation of proteins constitutes the primary form of ADP-ribosylation of proteins in response to DNA damage. Specificity for the different amino acids is conferred by interacting factors, such as hpf1 and nmnat1. Following interaction with hpf1, catalyzes serine ADP-ribosylation of target proteins; hpf1 confers serine specificity by completing the parp1 active site. Also catalyzes tyrosine ADP-ribosylation of target proteins following interaction with hpf1. Following interaction with nmnat1, catalyzes glutamate and aspartate ADP-ribosylation of target proteins; nmnat1 confers glutamate and aspartate specificity. Parp1 initiates the repair of DNA breaks: recognizes and binds DNA breaks within chromatin and recruits hpf1, licensing serine ADP-ribosylation of target proteins, such as histones (H2BS6ADPr and H3S10ADPr), thereby promoting decompaction of chromatin and the recruitment of repair factors leading to the reparation of DNA strand breaks. In addition to base excision repair (BER) pathway, also involved in double-strand breaks (DSBs) repair. Mediates the poly-ADP-ribosylation of a number of proteins. In addition to proteins, also able to ADP-ribosylate DNA: catalyzes ADP-ribosylation of DNA strand break termini containing terminal phosphates and a 2'-OH group in single- and double-stranded DNA, respectively. Parp1-mediated DNA repair in neurons plays a role in sleep: senses DNA damage in neurons and promotes sleep, facilitating efficient DNA repair. In addition to DNA repair, also involved in other processes, such as transcription regulation, programmed cell death, membrane repair, adipogenesis and innate immunity. Acts as a repressor of transcription: binds to nucleosomes and modulates chromatin structure in a manner similar to histone H1, thereby altering RNA polymerase II. Acts both as a positive and negative regulator of transcription elongation, depending on the context. Poly-ADP-ribose chains generated by parp1 also play a role in poly-ADP-ribose-dependent cell death, a process named parthanatos. Also acts as a negative regulator of the cGAS-STING pathway by mediating poly-ADP-ribosylation and inactivation of cgas. Acts as a negative regulator of adipogenesis by catalyzing poly ADP-ribosylation of histone H2B on 'Glu-35' (H2BE35ADPr). In Gallus gallus (Chicken), this protein is Poly [ADP-ribose] polymerase 1 (PARP1).